Reading from the N-terminus, the 282-residue chain is Nucleotide-binding protein in ptsN-ptsO intergenic region (282 aa).

8-15 lines the ATP pocket; that stretch reads GRSGSGKS. Position 56 to 59 (56 to 59) interacts with GTP; the sequence is DVRN.

The protein belongs to the RapZ-like family.

In terms of biological role, displays ATPase and GTPase activities. This chain is Nucleotide-binding protein in ptsN-ptsO intergenic region, found in Shewanella violacea.